Consider the following 328-residue polypeptide: MTTLVTGATGHLGANLVRALLARGEKVRAFIRRQSDVAALDGLAVERAYGDLRDRRSIRDALEGVERLYHTAAFVSIRDGDRQELFDVNVVGTRMLMQEARRAGVRRVVHTSSFGAVGINPQGASNEHWTVSPFEPGTDYERTKAVSEHDVILEAVRGLDVTIVNPAAIVGPWDFRPSLVGRTILDFAHGRMRAFVPGAFDFVPMRDVVAVELLAMDKGIRGERYLVTGEHCTIGQILQWLEELTGHPRPRLAIPPRLMQGIALLKDPLERRFFPRRTPRFNYHSIRLLNSGKRGDSSRSRRELGLVPTSTRAAFADAVAWFRERGMI.

The protein belongs to the NAD(P)-dependent epimerase/dehydratase family.

It carries out the reaction a 3beta-hydroxy-4alpha-methylsteroid-4beta-carboxylate + NAD(+) = a 4alpha-methyl-3-oxosteroid + CO2 + NADH. The enzyme catalyses a 3beta-hydroxy-4alpha-methylsteroid-4beta-carboxylate + NADP(+) = a 4alpha-methyl-3-oxosteroid + CO2 + NADPH. It catalyses the reaction 4beta-carboxy-4alpha-methyl-5alpha-cholesta-8,24-dien-3beta-ol + NAD(+) = 3-dehydro-4alpha-methylzymosterol + CO2 + NADH. The catalysed reaction is 4beta-carboxy-4alpha-methyl-5alpha-cholesta-8,24-dien-3beta-ol + NADP(+) = 3-dehydro-4alpha-methylzymosterol + CO2 + NADPH. It carries out the reaction 3-dehydro-4alpha-methylzymosterol + NADPH + H(+) = 4alpha-methylzymosterol + NADP(+). The protein operates within steroid biosynthesis; sterol biosynthesis. Participates in the biosynthesis of bacterial sterols. Together with SdmA, removes one methyl group from the C-4 position of 4,4-dimethylated steroid molecules. SdmB catalyzes an oxidative decarboxylation that results in reduction of the 3beta-hydroxy group at the C-3 carbon to an oxo group. It also functions as a ketoreductase that converts the C-3 oxo group back to a hydroxyl group after C-4 demethylation. The sequence is that of Sterol demethylase protein B from Methylococcus capsulatus (strain ATCC 33009 / NCIMB 11132 / Bath).